Consider the following 356-residue polypeptide: Carbohydrate sulfotransferase 10 (356 aa).

The Cytoplasmic portion of the chain corresponds to 1–6 (MHHQWL). The helical; Signal-anchor for type II membrane protein transmembrane segment at 7-27 (LLAACFWVIFMFMVASKFITL) threads the bilayer. At 28–356 (TFKDPDVYSA…GYQKPDFLLN (329 aa)) the chain is on the lumenal side. Asn99 carries N-linked (GlcNAc...) asparagine glycosylation. 3'-phosphoadenylyl sulfate is bound by residues 127–133 (PKVGNTQ) and 189–197 (RDPFERLIS). Residues Asn228 and Asn316 are each glycosylated (N-linked (GlcNAc...) asparagine).

Belongs to the sulfotransferase 2 family. In fetal tissues, it is predominantly expressed in brain, and weakly expressed in lung, kidney and liver. In adult, it is highly expressed in brain, testis, ovary, expressed at intermediate level in heart, pancreas, skeletal muscle, spleen and thymus, and weakly expressed in other tissues. In brain, it is expressed at higher level in the frontal lobe.

It localises to the golgi apparatus membrane. It carries out the reaction 3-O-{beta-D-GlcA-(1-&gt;[3)-alpha-D-Xyl-(1-&gt;3)-beta-D-GlcA-(1-&gt;](n)-4)-beta-D-Xyl-(1-&gt;4)-Rib-ol-P-Rib-ol-P-3-beta-D-GalNAc-(1-&gt;3)-beta-D-GlcNAc-(1-&gt;4)-O-6-P-alpha-D-Man}-L-Thr-[protein] + 3'-phosphoadenylyl sulfate = 3-O-{O-3-S-beta-D-GlcA-(1-&gt;[3)-alpha-D-Xyl-(1-&gt;3)-beta-D-GlcA-(1-&gt;](n)-4)-beta-D-Xyl-(1-&gt;4)-Rib-ol-P-Rib-ol-P-3-beta-D-GalNAc-(1-&gt;3)-beta-D-GlcNAc-(1-&gt;4)-O-6-P-alpha-D-Man}-L-Thr-[protein] + adenosine 3',5'-bisphosphate + H(+). It catalyses the reaction 17beta-estradiol 3-O-(beta-D-glucuronate) + 3'-phosphoadenylyl sulfate = 17beta-estradiol 3-O-(3-sulfo-beta-D-glucuronate) + adenosine 3',5'-bisphosphate + H(+). The enzyme catalyses 17beta-estradiol 3-O-(beta-D-glucuronate) 17-sulfate + 3'-phosphoadenylyl sulfate = 17beta-estradiol 3-O-(3-sulfo-beta-D-glucuronate) 17-sulfate + adenosine 3',5'-bisphosphate + H(+). The catalysed reaction is 17beta-estradiol 17-O-(beta-D-glucuronate) + 3'-phosphoadenylyl sulfate = 17beta-estradiol 17-O-(3-sulfo-beta-D-glucuronate) + adenosine 3',5'-bisphosphate + H(+). It carries out the reaction 16alpha,17beta-estriol 3-O-(beta-D-glucuronate) + 3'-phosphoadenylyl sulfate = 16alpha,17beta-estriol 3-O-(3-sulfo-beta-D-glucuronate) + adenosine 3',5'-bisphosphate + H(+). It catalyses the reaction 16alpha,17beta-estriol 16-O-(beta-D-glucuronate) + 3'-phosphoadenylyl sulfate = 16alpha,17beta-estriol 16-O-(3-sulfo-beta-D-glucuronate) + adenosine 3',5'-bisphosphate + H(+). The enzyme catalyses 16alpha,17beta-estriol 17-O-(beta-D-glucuronate) + 3'-phosphoadenylyl sulfate = 16alpha,17beta-estriol 17-O-(3-sulfo-beta-D-glucuronate) + adenosine 3',5'-bisphosphate + H(+). The catalysed reaction is estrone 3-O-(beta-D-glucuronate) + 3'-phosphoadenylyl sulfate = estrone 3-O-(3-sulfo-beta-D-glucuronate) + adenosine 3',5'-bisphosphate + H(+). It carries out the reaction 3alpha,20alpha-dihydroxy-5beta-pregnane 3-O-(beta-D-glucuronate) + 3'-phosphoadenylyl sulfate = 3alpha,20alpha-dihydroxy-5beta-pregnane 3-O-(3-sulfo-beta-D-glucuronate) + adenosine 3',5'-bisphosphate + H(+). It catalyses the reaction testosterone 17-O-(beta-D-glucuronate) + 3'-phosphoadenylyl sulfate = testosterone 17-O-(3-sulfo-beta-D-glucuronate) + adenosine 3',5'-bisphosphate + H(+). The enzyme catalyses 3beta-androst-5-en-17-one 3-O-(beta-D-glucuronate) + 3'-phosphoadenylyl sulfate = 3beta-androst-5-en-17-one 3-O-(3-sulfo-beta-D-glucuronate) + adenosine 3',5'-bisphosphate + H(+). The catalysed reaction is 3alpha,17alpha-dihydroxy-5beta-androstane-11-one-17beta-carboxylate 3-O-(beta-D-glucuronate) + 3'-phosphoadenylyl sulfate = 3alpha,17alpha-dihydroxy-5beta-androstane-11-one-17beta-carboxylate 3-O-(3-sulfo-beta-D-glucuronate) + adenosine 3',5'-bisphosphate + H(+). It carries out the reaction 3alpha-hydroxyetiocholan-17-one 3-O-(beta-D-glucuronate) + 3'-phosphoadenylyl sulfate = 3alpha-hydroxyetiocholan-17-one 3-O-(3-sulfo-beta-D-glucuronate) + adenosine 3',5'-bisphosphate + H(+). It participates in steroid metabolism. Its pathway is protein modification; carbohydrate sulfation. In terms of biological role, catalyzes the transfer of sulfate from 3'-phosphoadenylyl sulfate (PAPS) to position 3 of terminal glucuronic acid of both protein- and lipid-linked oligosaccharides. Participates in biosynthesis of HNK-1 carbohydrate structure 3-O-sulfo-beta-D-GlcA-(1-&gt;3)-beta-D-Gal-(1-&gt;4)-D-GlcNAc-R, a sulfated glucuronyl-lactosaminyl residue carried by many neural recognition molecules, which is involved in cell interactions during ontogenetic development and in synaptic plasticity in the adult. May be indirectly involved in synapse plasticity of the hippocampus, via its role in HNK-1 biosynthesis. Sulfates terminal glucuronyl residue of the laminin globular (LG)-domain binding epitope on DAG1/alpha-dystroglycan and prevents further polymerization by LARGE1 glycosyltransferase. Likely defines the chain length of LG epitope, conferring binding specificity to extracellular matrix components. Plays a role in down-regulating the steroid hormones. Sulfates glucuronidated estrogens and androgens with an impact in hormone cycle and fertility. Has a preference for glucuronyl moiety at the 3-hydroxyl group of a sterol ring rather than the 17-hydroxyl group, showing high catalytic efficiency for 17beta-estradiol 3-O-(beta-D-glucuronate) and dehydroepiandrosterone 3-O-(beta-D-glucuronate) hormones. The sequence is that of Carbohydrate sulfotransferase 10 from Homo sapiens (Human).